Here is a 279-residue protein sequence, read N- to C-terminus: Digeranylgeranylglyceryl phosphate synthase (279 aa).

8 helical membrane-spanning segments follow: residues 5-25 (GFFA…AIVA), 27-47 (LIAT…VLLV), 90-110 (FLLG…IALV), 127-147 (FFGN…GGAY), 148-168 (AGWH…LAML), 198-218 (KTAL…AVPY), 219-239 (LWWG…ILFA), and 259-279 (TLLK…AVFL).

Belongs to the UbiA prenyltransferase family. DGGGP synthase subfamily. Requires Mg(2+) as cofactor.

Its subcellular location is the cell membrane. The catalysed reaction is sn-3-O-(geranylgeranyl)glycerol 1-phosphate + (2E,6E,10E)-geranylgeranyl diphosphate = 2,3-bis-O-(geranylgeranyl)-sn-glycerol 1-phosphate + diphosphate. It participates in membrane lipid metabolism; glycerophospholipid metabolism. Prenyltransferase that catalyzes the transfer of the geranylgeranyl moiety of geranylgeranyl diphosphate (GGPP) to the C2 hydroxyl of (S)-3-O-geranylgeranylglyceryl phosphate (GGGP). This reaction is the second ether-bond-formation step in the biosynthesis of archaeal membrane lipids. The protein is Digeranylgeranylglyceryl phosphate synthase of Methanoregula boonei (strain DSM 21154 / JCM 14090 / 6A8).